Consider the following 338-residue polypeptide: Lipoate-protein ligase A (338 aa).

The BPL/LPL catalytic domain maps to 29-216 (PATQRVLFLW…AFFAHYGERV (188 aa)). ATP is bound by residues Arg71, 76 to 79 (GAVF), and Lys134. A (R)-lipoate-binding site is contributed by Lys134.

Belongs to the LplA family. Monomer.

The protein localises to the cytoplasm. The enzyme catalyses L-lysyl-[lipoyl-carrier protein] + (R)-lipoate + ATP = N(6)-[(R)-lipoyl]-L-lysyl-[lipoyl-carrier protein] + AMP + diphosphate + H(+). It participates in protein modification; protein lipoylation via exogenous pathway; protein N(6)-(lipoyl)lysine from lipoate: step 1/2. It functions in the pathway protein modification; protein lipoylation via exogenous pathway; protein N(6)-(lipoyl)lysine from lipoate: step 2/2. Functionally, catalyzes both the ATP-dependent activation of exogenously supplied lipoate to lipoyl-AMP and the transfer of the activated lipoyl onto the lipoyl domains of lipoate-dependent enzymes. This Shigella boydii serotype 18 (strain CDC 3083-94 / BS512) protein is Lipoate-protein ligase A.